A 240-amino-acid chain; its full sequence is Inhibitor of growth protein 5 (240 aa).

A disordered region spans residues 115–165 (MDGSDFESTGARSLKKGRSQKEKRSSRGRGRRTSEEDTPKKKKHKSGSEFT). Ser-118 is subject to Phosphoserine. Omega-N-methylarginine is present on Arg-126. The segment at 186–235 (PTYCLCHQVSYGEMIGCDNPDCPIEWFHFACVDLTTKPKGKWFCPRCVQE) adopts a PHD-type zinc-finger fold. Zn(2+) is bound by residues Cys-189, Cys-191, Cys-202, Cys-207, His-213, Cys-216, Cys-229, and Cys-232.

This sequence belongs to the ING family. Component of the HBO1 complex composed of KAT7/HBO1, MEAF6, ING5, and one scaffold subunit: complexes containing BRPF scaffold (BRPF1, BRD1/BRPF2 or BRPF3) direct KAT7/HBO1 specificity towards H3K14ac, while complexes containing JADE scaffold (JADE1, JADE2 and JADE3) mediate acetylation of histone H4. Component of the MOZ/MORF complex composed at least of ING5, KAT6A, KAT6B, MEAF6 and one of BRPF1, BRD1/BRPF2 and BRPF3. Interacts with H3K4me3 and to a lesser extent with H3K4me2. Interacts with EP300 and p53/TP53. Interacts with INCA1.

It is found in the nucleus. The protein localises to the chromosome. In terms of biological role, component of the HBO1 complex, which specifically mediates acetylation of histone H3 at 'Lys-14' (H3K14ac) and, to a lower extent, acetylation of histone H4. Component of the MOZ/MORF complex which has a histone H3 acetyltransferase activity. Through chromatin acetylation it may regulate DNA replication and may function as a transcriptional coactivator. Inhibits cell growth, induces a delay in S-phase progression and enhances Fas-induced apoptosis in an INCA1-dependent manner. This is Inhibitor of growth protein 5 (Ing5) from Mus musculus (Mouse).